The following is a 377-amino-acid chain: Probable sensor histidine kinase HK (377 aa).

2 disordered regions span residues 1 to 169 and 346 to 377; these read MAHP…RPAD and LPTPRPPFHEELPRITSSDTKDPNREHDTSDQ. The span at 10 to 54 shows a compositional bias: basic residues; the sequence is RLQRRHGARSGSSRCRHRRPVPRRRSRSRPRWRAARAHRRHHRRS. Over residues 84-98 the composition is skewed to basic and acidic residues; that stretch reads RRPDPRGGANTDHHA. 2 stretches are compositionally biased toward basic residues: residues 99-115 and 137-146; these read APRHRRAAAGTSHRRRD and TTVRRRRQPR. In terms of domain architecture, Histidine kinase spans 146–350; sequence RITHPVGTAD…ELRITLPTPR (205 aa). At His-149 the chain carries Phosphohistidine; by autocatalysis. Over residues 352 to 377 the composition is skewed to basic and acidic residues; it reads PFHEELPRITSSDTKDPNREHDTSDQ.

In terms of processing, autophosphorylated.

The catalysed reaction is ATP + protein L-histidine = ADP + protein N-phospho-L-histidine.. Its function is as follows. Member of the two-component system HK/TcrA. Phosphorylates TcrA. In Mycobacterium tuberculosis (strain CDC 1551 / Oshkosh), this protein is Probable sensor histidine kinase HK.